Reading from the N-terminus, the 202-residue chain is Histone H1 (202 aa).

2 disordered regions span residues 1–50 (MTAI…VTHP) and 114–202 (YKLS…KIAV). The span at 18-38 (EASKVKEQAPATDKKPRAPKE) shows a compositional bias: basic and acidic residues. Positions 48–118 (THPPYFQMIK…KIKASYKLSE (71 aa)) constitute an H15 domain. Over residues 160–202 (KAKATPKPKKVGAKRTRKSTPAKAKQPKSIKSPAAKRAKKIAV) the composition is skewed to basic residues.

The protein belongs to the histone H1/H5 family.

It is found in the nucleus. It localises to the chromosome. Its function is as follows. Histones H1 are necessary for the condensation of nucleosome chains into higher-order structures. This is Histone H1 from Solanum pennellii (Tomato).